Here is a 176-residue protein sequence, read N- to C-terminus: Sperm-egg fusion protein TMEM95 (176 aa).

Residues 1 to 16 (MWRLALGGVFLAAAQA) form the signal peptide. Cystine bridges form between cysteine 17/cysteine 118, cysteine 20/cysteine 121, cysteine 105/cysteine 128, and cysteine 109/cysteine 134. Over 17–145 (CVFCRLPAHD…PGSQDLWEAK (129 aa)) the chain is Extracellular. A helical membrane pass occupies residues 146 to 166 (ILLLSIFGAFLLLGVLSLLVE). The Cytoplasmic segment spans residues 167–176 (SHHLQAKSGL).

It belongs to the TMEM95 family. As to quaternary structure, does not interact with sperm-egg fusion proteins IZUMO1 or IZUMO1R/JUNO. N-glycosylated. In terms of tissue distribution, spermatozoa (at protein level).

Its subcellular location is the cytoplasmic vesicle. The protein resides in the secretory vesicle. The protein localises to the acrosome membrane. Its function is as follows. Sperm protein required for fusion of sperm with the egg membrane during fertilization. The protein is Sperm-egg fusion protein TMEM95 of Homo sapiens (Human).